Consider the following 248-residue polypeptide: 21S rRNA pseudouridine(2819) synthase (248 aa).

The active site involves Asp58.

This sequence belongs to the pseudouridine synthase RluA family.

Its subcellular location is the mitochondrion. The catalysed reaction is uridine(2819) in 21S rRNA = pseudouridine(2819) in 21S rRNA. Functionally, pseudouridylate synthase responsible for the pseudouridine-2819 formation in mitochondrial 21S rRNA. May modulate the efficiency or the fidelity of the mitochondrial translation machinery. The protein is 21S rRNA pseudouridine(2819) synthase (PUS5) of Candida albicans (strain SC5314 / ATCC MYA-2876) (Yeast).